We begin with the raw amino-acid sequence, 733 residues long: Zinc finger protein indra (733 aa).

Residues 17–91 form the ZAD domain; the sequence is VRCDHCGTSQ…RETVDRVQEQ (75 aa). Residues C19, C22, C64, and C67 each coordinate Zn(2+). Positions 90-100 are enriched in basic and acidic residues; sequence EQPAKKTKVAE. Positions 90–121 are disordered; sequence EQPAKKTKVAEIEEPSTQESDKKAVKVPKKNT. A phosphoserine mark is found at S109, S153, and S176. Phosphothreonine is present on residues T180 and T188. 2 consecutive C2H2-type zinc fingers follow at residues 228-251 and 259-282; these read FQCPECEFHAKFPKPYKEHLQKEH and YPCTLCIKTFGVLKTLKNHLRDTH. Residues 285-316 show a composition bias toward basic and acidic residues; it reads TFESEAKTKAKESKEKEAKSGAKNKIDAKAKE. Residues 285–336 are disordered; it reads TFESEAKTKAKESKEKEAKSGAKNKIDAKAKETNAVSQRKKPKEKKSKEKKT. 2 consecutive C2H2-type zinc fingers follow at residues 416–439 and 447–469; these read FQCEICDCELMTAKQMQEHMKTVH and FKCHVCEKSLATKQSLKTHMTLH. Disordered stretches follow at residues 499–525 and 540–622; these read IENTAEKVEGPKKSQQSPTKAAKFTNR and AFKT…SSDV. Over residues 592-602 the composition is skewed to polar residues; the sequence is SVSTTNGNSPA. A phosphoserine mark is found at S600, S642, and S646. T647 carries the phosphothreonine modification. 2 C2H2-type zinc fingers span residues 653–676 and 708–733; these read LSCDRCGKFVKSRQRLDSHMEKKH and LPCGVANCKKVFTEANFLSSHLRKRH. S654 is modified (phosphoserine).

The protein belongs to the krueppel C2H2-type zinc-finger protein family.

Its subcellular location is the nucleus. The protein localises to the nucleolus. Its function is as follows. Required for rDNA copy number maintenance and non-random sister chromatid segregation (NRSS) following unequal sister chromatid exchange. Binds ribosomal DNA (rDNA) preferentially binding to intergenic spacers (IGS) regions on both X and Y chromosomes. Essential for NRSS, a mechanism which contributes to the recovery and maintenance of inherently unstable rDNA copy numbers so that the integrity of the germline genome is upheld over generations and germline immortality is sustained. May be involved in transcriptional regulation. This chain is Zinc finger protein indra, found in Drosophila melanogaster (Fruit fly).